The sequence spans 608 residues: MQATIFSPRATLFPCKPLLPSHNVNSRRPSIISCSAQSVTADPSPPITDTNKLNKYSSRITEPKSQGGSQAILHGVGLSDDDLLKPQIGISSVWYEGNTCNMHLLKLSEAVKEGVENAGMVGFRFNTIGVSDAISMGTRGMCFSLQSRDLIADSIETVMSAQWYDGNISIPGCDKNMPGTIMAMGRLNRPGIMVYGGTIKPGHFQDKTYDIVSAFQSYGEFVSGSISDEQRKTVLHHSCPGAGACGGMYTANTMASAIEAMGMSLPYSSSIPAEDPLKLDECRLAGKYLLELLKMDLKPRDIITPKSLRNAMVSVMALGGSTNAVLHLIAIARSVGLELTLDDFQKVSDAVPFLADLKPSGKYVMEDIHKIGGTPAVLRYLLELGLMDGDCMTVTGQTLAQNLENVPSLTEGQEIIRPLSNPIKETGHIQILRGDLAPDGSVAKITGKEGLYFSGPALVFEGEESMLAAISADPMSFKGTVVVIRGEGPKGGPGMPEMLTPTSAIMGAGLGKECALLTDGRFSGGSHGFVVGHICPEAQEGGPIGLIKNGDIITIDIGKKRIDTQVSPEEMNDRRKKWTAPAYKVNRGVLYKYIKNVQSASDGCVTDE.

The N-terminal 34 residues, 1–34, are a transit peptide targeting the chloroplast; it reads MQATIFSPRATLFPCKPLLPSHNVNSRRPSIISC. At S35 the chain carries N-acetylserine. [2Fe-2S] cluster is bound at residue C100. D132 contacts Mg(2+). C173 lines the [2Fe-2S] cluster pocket. A Mg(2+)-binding site is contributed by D174. Position 245 (C245) interacts with [2Fe-2S] cluster. Position 497 (E497) interacts with Mg(2+). S523 (proton acceptor) is an active-site residue.

The protein belongs to the IlvD/Edd family. It depends on [2Fe-2S] cluster as a cofactor. Mg(2+) is required as a cofactor.

It is found in the plastid. The protein resides in the chloroplast. The catalysed reaction is (2R)-2,3-dihydroxy-3-methylbutanoate = 3-methyl-2-oxobutanoate + H2O. It carries out the reaction (2R,3R)-2,3-dihydroxy-3-methylpentanoate = (S)-3-methyl-2-oxopentanoate + H2O. Its pathway is amino-acid biosynthesis; L-isoleucine biosynthesis; L-isoleucine from 2-oxobutanoate: step 3/4. It functions in the pathway amino-acid biosynthesis; L-valine biosynthesis; L-valine from pyruvate: step 3/4. With respect to regulation, is highly competitively inhibited by the fungal sesquiterpenoid aspterric acid, which is effective as a herbicide in spray applications. Its function is as follows. Functions in the biosynthesis of branched-chain amino acids. Catalyzes the dehydration of (2R,3R)-2,3-dihydroxy-3-methylpentanoate (2,3-dihydroxy-3-methylvalerate) into 2-oxo-3-methylpentanoate (2-oxo-3-methylvalerate) and of (2R)-2,3-dihydroxy-3-methylbutanoate (2,3-dihydroxyisovalerate) into 2-oxo-3-methylbutanoate (2-oxoisovalerate), the penultimate precursor to L-isoleucine and L-valine, respectively. This chain is Dihydroxy-acid dehydratase, chloroplastic, found in Arabidopsis thaliana (Mouse-ear cress).